A 239-amino-acid chain; its full sequence is Large ribosomal subunit protein uL3 (239 aa).

Residue Gln151 is modified to N5-methylglutamine.

This sequence belongs to the universal ribosomal protein uL3 family. In terms of assembly, part of the 50S ribosomal subunit. Forms a cluster with proteins L14 and L19. In terms of processing, methylated by PrmB.

Its function is as follows. One of the primary rRNA binding proteins, it binds directly near the 3'-end of the 23S rRNA, where it nucleates assembly of the 50S subunit. This is Large ribosomal subunit protein uL3 from Ruegeria sp. (strain TM1040) (Silicibacter sp.).